The chain runs to 310 residues: Probable cobalamin biosynthesis protein CobD (310 aa).

5 consecutive transmembrane segments (helical) span residues 53-73 (LVFGFITVFLTVFTVFLIFFT), 80-100 (LISNYYIKLFSYSLILSFSIG), 157-177 (DSIIAPLIYAAIFGLSGAFIY), 215-235 (IAGILLIISAPFYGGKIVPAI), and 289-309 (AVDYSVLLFLVIYMVLYFNLI).

Belongs to the CobD/CbiB family.

It localises to the cell membrane. It participates in cofactor biosynthesis; adenosylcobalamin biosynthesis. Converts cobyric acid to cobinamide by the addition of aminopropanol on the F carboxylic group. In Methanococcus vannielii (strain ATCC 35089 / DSM 1224 / JCM 13029 / OCM 148 / SB), this protein is Probable cobalamin biosynthesis protein CobD.